The chain runs to 2513 residues: Polyprotein P1234 (2513 aa).

Positions 28-259 constitute an Alphavirus-like MT domain; the sequence is EPKQVTPNDH…ESRKLLQSWH (232 aa). A nsP1 membrane-binding region spans residues 244-263; that stretch reads GSTLYPESRKLLQSWHLPSV. Residues Cys-417 and Cys-419 are each lipidated (S-palmitoyl cysteine; by host). The region spanning 690 to 842 is the (+)RNA virus helicase ATP-binding domain; that stretch reads DLTSPPYHEF…HNICTQVYHK (153 aa). 721-728 is an a ribonucleoside 5'-triphosphate binding site; it reads GVPGSGKS. In terms of domain architecture, (+)RNA virus helicase C-terminal spans 843–991; sequence SISRRCTLPV…IKEWEAEHAS (149 aa). Residues 1004-1327 form the Peptidase C9 domain; that stretch reads DTFQNKANVC…NQLNAVYAGL (324 aa). The interval 1005–1024 is nucleolus localization signal; the sequence is TFQNKANVCWAKCLVPILDT. Cys-1013 serves as the catalytic For cysteine protease nsP2 activity. The Nuclear export signal motif lies at 1058–1067; sequence TRIYGVDLDS. The active-site For cysteine protease nsP2 activity is His-1083. A Nuclear localization signal motif is present at residues 1182 to 1186; it reads PTKRV. 6 residues coordinate ADP-D-ribose: Asp-1343, Asn-1357, Gly-1365, Gly-1445, Val-1446, and Tyr-1447. Zn(2+) contacts are provided by Cys-1595, Cys-1597, Cys-1620, and Cys-1638. 2 short sequence motifs (FGDF; binding to host G3BP1) span residues 1851–1854 and 1869–1872; these read FGDF. The region spanning 2267–2382 is the RdRp catalytic domain; that stretch reads DAVLETDIAS…HGVVSDALMA (116 aa).

As to quaternary structure, interacts with non-structural protein 3. Interacts with RNA-directed RNA polymerase nsP4. Interacts with protease nsP2. interacts with itself. In terms of assembly, interacts with mRNA-capping enzyme nsP1. Interacts with host DDX1. Interacts with host DDX3. Interacts (via C-terminus) with host G3BP1; this interaction inhibits the formation of host stress granules on viral mRNAs and the nsp3-G3BP1 complexes bind viral RNAs and probably orchestrate the assembly of viral replication complexes. Interacts (via C-terminus) with host G3BP2; this interaction inhibits the formation of host stress granules on viral mRNAs and the nsp3-G3BP2 complexes bind viral RNAs and probably orchestrate the assembly of viral replication complexes. Interacts with mRNA-capping enzyme nsP1. Interacts with protease nsP2. interacts with itself. As to quaternary structure, interacts with RNA-directed RNA polymerase nsP4. Interacts with mRNA-capping enzyme nsP1. Interacts with KPNA1/karyopherin-alpha1; this interaction probably allows the active transport of protease nsP2 into the host nucleus. Mg(2+) is required as a cofactor. Requires Mn(2+) as cofactor. Specific enzymatic cleavages in vivo yield mature proteins. The processing of the polyprotein is temporally regulated. In early stages (1.7 hpi), P1234 is first cleaved in trans through its nsP2 protease activity, releasing P123' and nsP4, which associate to form the early replication complex. At the same time, P1234 is also cut at the nsP1/nsP2 site early in infection but with lower efficiency. After replication of the viral minus-strand RNAs (4 hpi), the polyproteins are cut at the nsP1/nsP2 and nsP2/nsP3 sites very efficiently, preventing accumulation of P123' and P1234 and allowing the formation of the late replication complex. NsP3'/nsP4 site is not cleaved anymore and P34 is produced rather than nsP4. In terms of processing, specific enzymatic cleavages in vivo yield mature proteins. The processing of the polyprotein is temporally regulated. In early stages (1.7 hpi), P123 is cleaved at the nsP1/nsP2 site with low efficiency. After replication of the viral minus-strand RNAs (4 hpi), the polyproteins are cut at the nsP1/nsP2 and nsP2/nsP3 sites very efficiently, preventing accumulation of P123 and allowing the formation of the late replication complex. Post-translationally, specific enzymatic cleavages in vivo yield mature proteins. The processing of the polyprotein is temporally regulated. In early stages (1.7 hpi), P123 is cleaved at the nsP1/nsP2 site with low efficiency. After replication of the viral minus-strand RNAs (4 hpi), the polyproteins are cut at the nsP1/nsP2 and nsP2/nsP3 sites very efficiently, preventing accumulation of P123' and allowing the formation of the late replication complex. Palmitoylated by host palmitoyltransferases ZDHHC2 and ZDHHC19. In terms of processing, phosphorylated by host on serines and threonines. Post-translationally, ubiquitinated; targets the protein for rapid degradation via the ubiquitin system. Nsp4 is present in extremely low quantities due to low frequency of translation through the amber stop-codon and the degradation by the ubiquitin pathway.

It localises to the host cytoplasmic vesicle membrane. Its subcellular location is the host cell membrane. The protein localises to the host cell projection. It is found in the host filopodium. The protein resides in the host nucleus. It localises to the host cytoplasm. It catalyses the reaction GTP + S-adenosyl-L-methionine = N(7)-methyl-GTP + S-adenosyl-L-homocysteine. The enzyme catalyses N(7)-methyl-GTP + L-histidyl-[protein] = N(tele)-(N(7)-methylguanosine 5'-phospho)-L-histidyl-[protein] + diphosphate. It carries out the reaction N(tele)-(N(7)-methylguanosine 5'-phospho)-L-histidyl-[protein] + a 5'-end diphospho-(purine-ribonucleoside) in mRNA + H(+) = a 5'-end (N(7)-methyl 5'-triphosphoguanosine)-(purine-ribonucleoside) in mRNA + L-histidyl-[protein]. The catalysed reaction is a 5'-end triphospho-ribonucleoside in mRNA + H2O = a 5'-end diphospho-ribonucleoside in mRNA + phosphate + H(+). It catalyses the reaction a ribonucleoside 5'-triphosphate + H2O = a ribonucleoside 5'-diphosphate + phosphate + H(+). The enzyme catalyses ATP + H2O = ADP + phosphate + H(+). It carries out the reaction RNA(n) + a ribonucleoside 5'-triphosphate = RNA(n+1) + diphosphate. The catalysed reaction is 4-O-(ADP-D-ribosyl)-L-aspartyl-[protein] + H2O = L-aspartyl-[protein] + ADP-D-ribose + H(+). It catalyses the reaction 5-O-(ADP-D-ribosyl)-L-glutamyl-[protein] + H2O = L-glutamyl-[protein] + ADP-D-ribose + H(+). The enzyme catalyses RNA(n) + ATP = RNA(n)-3'-adenine ribonucleotide + diphosphate. It carries out the reaction ADP-alpha-D-ribose 1''-phosphate + H2O = ADP-D-ribose + phosphate. Functionally, inactive precursor of the viral replicase, which is activated by cleavages carried out by the viral protease nsP2. Its function is as follows. The early replication complex formed by the polyprotein P123' and nsP4 synthesizes minus-strand RNAs. Polyprotein P123' is a short-lived polyprotein that accumulates during early stage of infection. As soon P123' is cleaved into mature proteins, the plus-strand RNAs synthesis begins. The early replication complex formed by the polyprotein P123 and nsP4 synthesizes minus-strand RNAs. As soon P123 is cleaved into mature proteins, the plus-strand RNAs synthesis begins. In terms of biological role, cytoplasmic capping enzyme that catalyzes two virus-specific reactions: methyltransferase and nsP1 guanylyltransferase. mRNA-capping is necessary since all viral RNAs are synthesized in the cytoplasm, and host capping enzymes are restricted to the nucleus. The enzymatic reaction involves a covalent link between 7-methyl-GMP and nsP1, whereas eukaryotic capping enzymes form a covalent complex only with GMP. nsP1 capping consists in the following reactions: GTP is first methylated into 7-methyl-GMP and then is covalently linked to nsP1 to form the m7GMp-nsP1 complex from which 7-methyl-GMP complex is transferred to the mRNA to create the cap structure. NsP1 is also needed for the initiation of the minus-strand RNAs synthesis. Probably serves as a membrane anchor for the replication complex composed of nsP1-nsP4. Palmitoylated nsP1 is remodeling host cell cytoskeleton, and induces filopodium-like structure formation at the surface of the host cell. Functionally, multifunctional protein whose N-terminus is part of the RNA polymerase complex and displays NTPase, RNA triphosphatase and helicase activities. NTPase and RNA triphosphatase are involved in viral RNA capping and helicase keeps a check on the dsRNA replication intermediates. The C-terminus harbors a protease that specifically cleaves the polyproteins and releases the mature proteins. Required for the shutoff of minus-strand RNAs synthesis. Specifically inhibits the host IFN response by promoting the nuclear export of host STAT1. Also inhibits host transcription by inducing the rapid proteasome-dependent degradation of POLR2A, a catalytic subunit of the RNAPII complex. The resulting inhibition of cellular protein synthesis serves to ensure maximal viral gene expression and to evade host immune response. Its function is as follows. Seems to be essential for minus-strand RNAs and subgenomic 26S mRNAs synthesis. Displays mono-ADP-ribosylhydrolase activity. ADP-ribosylation is a post-translational modification that controls various processes of the host cell and the virus probably needs to revert it for optimal viral replication. Binds proteins of FXR family and sequesters them into the viral RNA replication complexes thereby inhibiting the formation of host stress granules on viral mRNAs. The nsp3'-FXR complexes bind viral RNAs and probably orchestrate the assembly of viral replication complexes, thanks to the ability of FXR family members to self-assemble and bind DNA. Seems to be essential for minus-strand RNAs and subgenomic 26S mRNAs synthesis. Displays mono-ADP-ribosylhydrolase activity. ADP-ribosylation is a post-translational modification that controls various processes of the host cell and the virus probably needs to revert it for optimal viral replication. Binds proteins of G3BP family and sequesters them into the viral RNA replication complexes thereby inhibiting the formation of host stress granules on viral mRNAs. The nsp3-G3BP complexes bind viral RNAs and probably orchestrate the assembly of viral replication complexes, thanks to the ability of G3BP family members to self-assemble and bind DNA. In terms of biological role, RNA dependent RNA polymerase. Replicates genomic and antigenomic RNA by recognizing replications specific signals. The early replication complex formed by the polyprotein P123 and nsP4 synthesizes minus-strand RNAs. The late replication complex composed of fully processed nsP1-nsP4 is responsible for the production of genomic and subgenomic plus-strand RNAs. This chain is Polyprotein P1234, found in Anopheles (Human).